A 341-amino-acid polypeptide reads, in one-letter code: HTH-type transcriptional repressor PurR (341 aa).

Residues 2-56 form the HTH lacI-type domain; the sequence is ATIKDVAKHAGVSTTTVSHVINKTRFVAENTKAAVWAAIKELHYSPSAVARSLKV. Residues 4 to 23 constitute a DNA-binding region (H-T-H motif); sequence IKDVAKHAGVSTTTVSHVIN. Residues 48–56 mediate DNA binding; that stretch reads SAVARSLKV. Residues Tyr73, Arg190, Thr192, and Asp275 each contribute to the hypoxanthine site.

As to quaternary structure, homodimer.

The protein operates within purine metabolism; purine nucleotide biosynthesis [regulation]. Is the main repressor of the genes involved in the de novo synthesis of purine nucleotides, regulating purB, purC, purEK, purF, purHD, purL, purMN and guaBA expression. PurR is allosterically activated to bind its cognate DNA by binding the purine corepressors, hypoxanthine or guanine, thereby effecting transcription repression. This Yersinia pestis bv. Antiqua (strain Antiqua) protein is HTH-type transcriptional repressor PurR.